The chain runs to 100 residues: Large ribosomal subunit protein bL21 (100 aa).

This sequence belongs to the bacterial ribosomal protein bL21 family. In terms of assembly, part of the 50S ribosomal subunit. Contacts protein L20.

In terms of biological role, this protein binds to 23S rRNA in the presence of protein L20. The sequence is that of Large ribosomal subunit protein bL21 from Mycoplasma mycoides subsp. mycoides SC (strain CCUG 32753 / NCTC 10114 / PG1).